Reading from the N-terminus, the 782-residue chain is E3 ubiquitin-protein ligase SopA (782 aa).

The interval 136-171 (GVSVSANNRPTVSEGRTPPVSPSLSLQATSSPSSPA) is disordered. A compositionally biased stretch (low complexity) spans 157–171 (PSLSLQATSSPSSPA). Catalysis depends on cysteine 753, which acts as the Glycyl thioester intermediate.

It belongs to the SopA E3 ligase family. Ubiquitinated in the presence of host E1 ubiquitin-activating enzyme, E2 ubiquitin-conjugating enzyme and ubiquitin.

It localises to the secreted. The protein resides in the host cell. It catalyses the reaction S-ubiquitinyl-[E2 ubiquitin-conjugating enzyme]-L-cysteine + [acceptor protein]-L-lysine = [E2 ubiquitin-conjugating enzyme]-L-cysteine + N(6)-ubiquitinyl-[acceptor protein]-L-lysine.. Its function is as follows. Effector proteins function to alter host cell physiology and promote bacterial survival in host tissues. This protein is an E3 ubiquitin ligase that interferes with host's ubiquitination pathway. For instance, prevents host innate immune response by ubiquitinating and thus sending to degradation host E3 ubiquitin ligases TRIM56 and TRIM65. The polypeptide is E3 ubiquitin-protein ligase SopA (sopA) (Salmonella typhimurium (strain D23580)).